A 512-amino-acid chain; its full sequence is MSEIKEARLQKASSLVSKGFASYAQSFRVSHTTSFLIQKFDYLENGQEENFSVSLAGRVMAKRVMGKIAFFTISDQDGQIQLYLEKRIINLNLEKQKLLSFEDIKEIVDIGDWIGVYGTIKKTNKGELSIKVEKWEMLSKSLQPLPDKWHGLTDIEKRYRQRYLDLIVNPHSKNVFKTRAKCISFIRKWLDNRNFLEIETPILQSEAGGAEARPFITHHNTLDIPLYLRIATELHLKRMVVGGFEKVYELGRIFRNEGISTRHNPEFTSVEIYEAYSDYVDMMNLTEELIKDILADACGSLTINYQNKEIDFSKPWLRISMKDIVKKYTGIDFHSFNGDFLAAKKAVKNINVDFSNKVNTIGRLLNEVFEQKVESKLIEPTFVIDYPVEISPLARPHFDNKEIVQRFELFIVGRELANAFSELIDPVDQRERMQLQQSLRDKGDLEAHCIDEDFLNALEIGMPPTGGLGIGIDRLIMLITNSASIRDVIPFPLLKPEISSKKSEKLPLNEVK.

Glutamate 408 and glutamate 415 together coordinate Mg(2+).

The protein belongs to the class-II aminoacyl-tRNA synthetase family. As to quaternary structure, homodimer. It depends on Mg(2+) as a cofactor.

The protein localises to the cytoplasm. It catalyses the reaction tRNA(Lys) + L-lysine + ATP = L-lysyl-tRNA(Lys) + AMP + diphosphate. This chain is Lysine--tRNA ligase, found in Prochlorococcus marinus (strain MIT 9301).